The primary structure comprises 273 residues: Formamidopyrimidine-DNA glycosylase (273 aa).

Proline 2 serves as the catalytic Schiff-base intermediate with DNA. The Proton donor role is filled by glutamate 3. Lysine 57 (proton donor; for beta-elimination activity) is an active-site residue. DNA-binding residues include histidine 91, arginine 110, and lysine 151. The segment at 236 to 270 (QVYGRKGEACNDCGTIIEAKVIGQRNSYFCPHCQI) adopts an FPG-type zinc-finger fold. The active-site Proton donor; for delta-elimination activity is the arginine 260.

The protein belongs to the FPG family. As to quaternary structure, monomer. The cofactor is Zn(2+).

The catalysed reaction is Hydrolysis of DNA containing ring-opened 7-methylguanine residues, releasing 2,6-diamino-4-hydroxy-5-(N-methyl)formamidopyrimidine.. It carries out the reaction 2'-deoxyribonucleotide-(2'-deoxyribose 5'-phosphate)-2'-deoxyribonucleotide-DNA = a 3'-end 2'-deoxyribonucleotide-(2,3-dehydro-2,3-deoxyribose 5'-phosphate)-DNA + a 5'-end 5'-phospho-2'-deoxyribonucleoside-DNA + H(+). In terms of biological role, involved in base excision repair of DNA damaged by oxidation or by mutagenic agents. Acts as a DNA glycosylase that recognizes and removes damaged bases. Has a preference for oxidized purines, such as 7,8-dihydro-8-oxoguanine (8-oxoG). Has AP (apurinic/apyrimidinic) lyase activity and introduces nicks in the DNA strand. Cleaves the DNA backbone by beta-delta elimination to generate a single-strand break at the site of the removed base with both 3'- and 5'-phosphates. This chain is Formamidopyrimidine-DNA glycosylase, found in Actinobacillus pleuropneumoniae serotype 7 (strain AP76).